Reading from the N-terminus, the 521-residue chain is Ribonuclease Y (521 aa).

Residues 5-25 form a helical membrane-spanning segment; that stretch reads TVWILISILLATVGAVVGFFV. A disordered region spans residues 87-117; the sequence is KQENRLMQKEENLDRKDETLDNRERQLEKKE. The KH domain maps to 211 to 274; it reads TVSVVNLPND…ETARIALDKL (64 aa). The 94-residue stretch at 337–430 folds into the HD domain; it reads VLKHSMEVAY…VAAADALSAA (94 aa).

Belongs to the RNase Y family.

The protein localises to the cell membrane. In terms of biological role, endoribonuclease that initiates mRNA decay. The chain is Ribonuclease Y from Bacillus mycoides (strain KBAB4) (Bacillus weihenstephanensis).